Consider the following 390-residue polypeptide: Glucose-fructose oxidoreductase domain-containing protein 1 (390 aa).

Residues 1-21 (MLPGVGVFGTSLTSRVIIPLL) form the signal peptide. Asn-161, Asn-270, and Asn-354 each carry an N-linked (GlcNAc...) asparagine glycan.

It belongs to the Gfo/Idh/MocA family. Homodimer.

It is found in the secreted. In terms of biological role, probably catalytically inactive enzyme. Does not bind NAD or NADP. The protein is Glucose-fructose oxidoreductase domain-containing protein 1 (gfod1) of Xenopus tropicalis (Western clawed frog).